A 550-amino-acid polypeptide reads, in one-letter code: Homeobox and leucine zipper protein Homez (550 aa).

Positions 1-10 are enriched in pro residues; it reads MVRGWEPPPG. Residues 1 to 36 are disordered; it reads MVRGWEPPPGLDCAISEGHKSEGTMPPNKEASGLSS. Residues 55–114 constitute a DNA-binding region (homeobox 1); it reads WTQAAQTSELDSNEHLLKTFSYFPYPSLADIALLCLRYGLQMEKVKTWFMAQRLRCGISW. The disordered stretch occupies residues 168–199; it reads GPPTLSKPTQTKGLKVEPEEPSQMPPLPQSHQ. Residues K182, K200, and K202 each participate in a glycyl lysine isopeptide (Lys-Gly) (interchain with G-Cter in SUMO2) cross-link. Residues 223–265 form a disordered region; that stretch reads LQSSGLSKEQAGRGPNQSHGIGTASWNHSTTVPQPQARDKPPP. Residues 237–256 are compositionally biased toward polar residues; sequence PNQSHGIGTASWNHSTTVPQ. S351 bears the Phosphoserine mark. DNA-binding regions (homeobox) lie at residues 355-415 and 451-510; these read QRQR…KHGQ and TPPL…AEVV. A Nuclear localization signal motif is present at residues 358 to 363; that stretch reads RKTKRK. Disordered stretches follow at residues 424–465 and 512–550; these read VPGA…DIQP and CLDEEEEEEEEELPEDDEEEEEEEEEDDDDDDDDVIIQD. T451 bears the Phosphothreonine mark. Residues 452–463 are compositionally biased toward pro residues; it reads PPLPIPPPPPDI. Acidic residues predominate over residues 513–550; sequence LDEEEEEEEEELPEDDEEEEEEEEEDDDDDDDDVIIQD.

In terms of assembly, homodimer or heterodimer (Potential). Interacts with HOXC8. In terms of tissue distribution, ubiquitous. Strongly expressed in adult testis and kidney as well as fetal lung and kidney.

The protein localises to the nucleus. Functionally, may function as a transcriptional regulator. This Homo sapiens (Human) protein is Homeobox and leucine zipper protein Homez (HOMEZ).